The following is a 435-amino-acid chain: Serine--tRNA ligase (435 aa).

L-serine is bound at residue 238–240; the sequence is TAE. 269–271 contributes to the ATP binding site; sequence RAE. Glu-292 serves as a coordination point for L-serine. 356–359 provides a ligand contact to ATP; sequence EISS. Residue Ser-392 coordinates L-serine.

It belongs to the class-II aminoacyl-tRNA synthetase family. Type-1 seryl-tRNA synthetase subfamily. In terms of assembly, homodimer. The tRNA molecule binds across the dimer.

The protein localises to the cytoplasm. It carries out the reaction tRNA(Ser) + L-serine + ATP = L-seryl-tRNA(Ser) + AMP + diphosphate + H(+). The enzyme catalyses tRNA(Sec) + L-serine + ATP = L-seryl-tRNA(Sec) + AMP + diphosphate + H(+). It functions in the pathway aminoacyl-tRNA biosynthesis; selenocysteinyl-tRNA(Sec) biosynthesis; L-seryl-tRNA(Sec) from L-serine and tRNA(Sec): step 1/1. In terms of biological role, catalyzes the attachment of serine to tRNA(Ser). Is also able to aminoacylate tRNA(Sec) with serine, to form the misacylated tRNA L-seryl-tRNA(Sec), which will be further converted into selenocysteinyl-tRNA(Sec). This is Serine--tRNA ligase from Methylobacterium sp. (strain 4-46).